A 423-amino-acid chain; its full sequence is Tumor necrosis factor receptor superfamily member 19 (423 aa).

The N-terminal stretch at 1 to 29 is a signal peptide; sequence MALKVLLEQEKTFFTLLVLLGYLSCKVTC. Topologically, residues 30–170 are extracellular; sequence ESGDCRQQEF…TASSPRDTAL (141 aa). TNFR-Cys repeat units follow at residues 33-72, 74-114, and 116-149; these read DCRQ…DAQC, TCRL…DAIC, and DCLP…EPHC. Cystine bridges form between cysteine 34-cysteine 46, cysteine 49-cysteine 62, cysteine 52-cysteine 72, cysteine 75-cysteine 89, cysteine 92-cysteine 106, cysteine 95-cysteine 114, cysteine 117-cysteine 135, and cysteine 138-cysteine 149. Asparagine 105 is a glycosylation site (N-linked (GlcNAc...) asparagine). Residues 171 to 191 form a helical membrane-spanning segment; that stretch reads AAVICSALATVLLALLILCVI. The Cytoplasmic portion of the chain corresponds to 192 to 423; it reads YCKRQFMEKK…LQVRQRLGSL (232 aa).

Associates with TRAF1, TRAF2, TRAF3 and TRAF5. Interacts with LINGO1. In terms of tissue distribution, highly expressed in prostate. Detected at lower levels in thymus, spleen, testis, uterus, small intestine, colon and peripheral blood leukocytes.

It localises to the membrane. Functionally, can mediate activation of JNK and NF-kappa-B. May promote caspase-independent cell death. This is Tumor necrosis factor receptor superfamily member 19 (TNFRSF19) from Homo sapiens (Human).